Consider the following 196-residue polypeptide: Carnitine operon protein CaiE (196 aa).

Residues 173-196 form a disordered region; it reads TQPLRQMEENRPRLQGTTDVTPKR. The span at 187–196 shows a compositional bias: polar residues; it reads QGTTDVTPKR.

Belongs to the transferase hexapeptide repeat family.

It functions in the pathway amine and polyamine metabolism; carnitine metabolism. Functionally, overproduction of CaiE stimulates the activity of CaiB and CaiD. The polypeptide is Carnitine operon protein CaiE (Escherichia coli O157:H7).